A 159-amino-acid polypeptide reads, in one-letter code: MNQNTTGITNYNKAINPQQFDKVVEAILAGKYSWACVLMLRFAGYNPMHYIPYRTYNRLLKENSEASKVQQQQHDNLKNSQVAAVSRSNTNMPSSCLSKIKDLAYLEVVGKQTTEIHGGNLDQWLTEQVHEFQDMYLEPQAISNQDITFKLSDLDFIHN.

Residues Met-1–Tyr-50 are required to complement a hetP deletion.

Belongs to the HetP family. As to quaternary structure, in bacterial two-hybrid assays interacts weakly with Asl1930, Alr2902 and Alr3234.

In terms of biological role, promotes heterocyst differentiation and commitment when nitrogen is limiting. Interplay between the 4 HetP paralogs controls the timing of commitment to heterocyst formation and its duration. Epistatic analysis show that the 3 paralogs act upstream of hetP to delay commitment (asl1930, alr3234) or inhibit development (alr2902). Asl1930 and Alr3234 must also attenuate the activity of Alr2902. Required for heterocyst formation. Functions directly downstream of master regulator HetR to promote heterocyst differentiation, functioning downstream of patterning (cell choice). Partially functionally redundant with homologs alr2902 and asl1930 but not alr3234. Overexpression leads to more than wild-type levels of heterocysts. Overexpression in the absence of hetR partially bypasses hetR deletion, allowing differentiation of heterocysts, although they only fix nitrogen in the absence of oxygen (a Fox- Fix+ phenotype), suggesting they are not fully. The protein is Heterocyst differentiation protein HetP of Nostoc sp. (strain PCC 7120 / SAG 25.82 / UTEX 2576).